The following is a 357-amino-acid chain: tRNA N6-adenosine threonylcarbamoyltransferase (357 aa).

Fe cation contacts are provided by His116 and His120. Substrate is bound by residues 139-143 (LVSGG), Asp172, Gly185, and Asn284. Asp312 contributes to the Fe cation binding site.

Belongs to the KAE1 / TsaD family. Requires Fe(2+) as cofactor.

The protein resides in the cytoplasm. It catalyses the reaction L-threonylcarbamoyladenylate + adenosine(37) in tRNA = N(6)-L-threonylcarbamoyladenosine(37) in tRNA + AMP + H(+). Its function is as follows. Required for the formation of a threonylcarbamoyl group on adenosine at position 37 (t(6)A37) in tRNAs that read codons beginning with adenine. Is involved in the transfer of the threonylcarbamoyl moiety of threonylcarbamoyl-AMP (TC-AMP) to the N6 group of A37, together with TsaE and TsaB. TsaD likely plays a direct catalytic role in this reaction. This chain is tRNA N6-adenosine threonylcarbamoyltransferase, found in Synechococcus sp. (strain CC9605).